Reading from the N-terminus, the 187-residue chain is Elongation factor P (187 aa).

This sequence belongs to the elongation factor P family.

Its subcellular location is the cytoplasm. It participates in protein biosynthesis; polypeptide chain elongation. In terms of biological role, involved in peptide bond synthesis. Stimulates efficient translation and peptide-bond synthesis on native or reconstituted 70S ribosomes in vitro. Probably functions indirectly by altering the affinity of the ribosome for aminoacyl-tRNA, thus increasing their reactivity as acceptors for peptidyl transferase. This Synechococcus sp. (strain WH7803) protein is Elongation factor P.